A 500-amino-acid chain; its full sequence is NAD(P)H-quinone oxidoreductase chain 4, chloroplastic (500 aa).

15 helical membrane passes run 4–24 (FYWL…IALL), 35–55 (YTIC…CYHF), 80–100 (LGID…TTLA), 113–130 (LFHF…GSFS), 134–154 (LLLF…LLSM), 167–187 (FILY…GMGL), 208–228 (ALEI…SPII), 242–262 (HYST…YGLV), 274–294 (SIFS…AALT), 305–325 (IAYS…SITD), 330–350 (GAIL…FLAG), 364–384 (MGGI…FSMA), 386–406 (LALP…GIIT), 416–436 (ILIT…SLSM), and 462–482 (IFIF…PDFV).

It belongs to the complex I subunit 4 family.

Its subcellular location is the plastid. It localises to the chloroplast thylakoid membrane. It catalyses the reaction a plastoquinone + NADH + (n+1) H(+)(in) = a plastoquinol + NAD(+) + n H(+)(out). It carries out the reaction a plastoquinone + NADPH + (n+1) H(+)(in) = a plastoquinol + NADP(+) + n H(+)(out). This Nymphaea alba (White water-lily) protein is NAD(P)H-quinone oxidoreductase chain 4, chloroplastic.